The following is a 508-amino-acid chain: Photosystem II CP47 reaction center protein (508 aa).

Helical transmembrane passes span 21 to 36 (SVHI…WAGS), 101 to 115 (IVFS…IWHW), 140 to 156 (GIHL…FGAF), 203 to 218 (IAAG…FHLS), 237 to 252 (VLSS…AFVV), and 457 to 472 (SFAL…HGSR).

This sequence belongs to the PsbB/PsbC family. PsbB subfamily. In terms of assembly, PSII is composed of 1 copy each of membrane proteins PsbA, PsbB, PsbC, PsbD, PsbE, PsbF, PsbH, PsbI, PsbJ, PsbK, PsbL, PsbM, PsbT, PsbX, PsbY, PsbZ, Psb30/Ycf12, at least 3 peripheral proteins of the oxygen-evolving complex and a large number of cofactors. It forms dimeric complexes. Binds multiple chlorophylls. PSII binds additional chlorophylls, carotenoids and specific lipids. is required as a cofactor.

The protein resides in the plastid. It is found in the chloroplast thylakoid membrane. One of the components of the core complex of photosystem II (PSII). It binds chlorophyll and helps catalyze the primary light-induced photochemical processes of PSII. PSII is a light-driven water:plastoquinone oxidoreductase, using light energy to abstract electrons from H(2)O, generating O(2) and a proton gradient subsequently used for ATP formation. The chain is Photosystem II CP47 reaction center protein from Capsella bursa-pastoris (Shepherd's purse).